Here is a 34-residue protein sequence, read N- to C-terminus: Cytochrome b6-f complex subunit 8 (34 aa).

Residues 3–23 (IFQIGWAALAAIFTFSIAMVV) form a helical membrane-spanning segment.

This sequence belongs to the PetN family. The 4 large subunits of the cytochrome b6-f complex are cytochrome b6, subunit IV (17 kDa polypeptide, PetD), cytochrome f and the Rieske protein, while the 4 small subunits are PetG, PetL, PetM and PetN. The complex functions as a dimer.

It is found in the cellular thylakoid membrane. Functionally, component of the cytochrome b6-f complex, which mediates electron transfer between photosystem II (PSII) and photosystem I (PSI), cyclic electron flow around PSI, and state transitions. In Prochlorococcus marinus subsp. pastoris (strain CCMP1986 / NIES-2087 / MED4), this protein is Cytochrome b6-f complex subunit 8.